The chain runs to 156 residues: 3-dehydroquinate dehydratase (156 aa).

The active-site Proton acceptor is Tyr24. Residues Asn76, His82, and Asp89 each contribute to the substrate site. The active-site Proton donor is the His102. Substrate contacts are provided by residues 103-104 (IS) and Arg113.

Belongs to the type-II 3-dehydroquinase family. Homododecamer.

It carries out the reaction 3-dehydroquinate = 3-dehydroshikimate + H2O. It functions in the pathway metabolic intermediate biosynthesis; chorismate biosynthesis; chorismate from D-erythrose 4-phosphate and phosphoenolpyruvate: step 3/7. Functionally, catalyzes a trans-dehydration via an enolate intermediate. This chain is 3-dehydroquinate dehydratase, found in Nitrobacter winogradskyi (strain ATCC 25391 / DSM 10237 / CIP 104748 / NCIMB 11846 / Nb-255).